A 247-amino-acid polypeptide reads, in one-letter code: Adenosine 5'-phosphosulfate reductase (247 aa).

[4Fe-4S] cluster-binding residues include Cys-133, Cys-134, Cys-216, and Cys-219. The interval Lys-222–Ser-247 is disordered. The active-site Nucleophile; cysteine thiosulfonate intermediate is Cys-242.

The protein belongs to the PAPS reductase family. CysH subfamily. [4Fe-4S] cluster is required as a cofactor.

Its subcellular location is the cytoplasm. It catalyses the reaction [thioredoxin]-disulfide + sulfite + AMP + 2 H(+) = adenosine 5'-phosphosulfate + [thioredoxin]-dithiol. Its pathway is sulfur metabolism; hydrogen sulfide biosynthesis; sulfite from sulfate. Catalyzes the formation of sulfite from adenosine 5'-phosphosulfate (APS) using thioredoxin as an electron donor. The sequence is that of Adenosine 5'-phosphosulfate reductase from Rhodococcus opacus (strain B4).